The sequence spans 629 residues: tRNA uridine 5-carboxymethylaminomethyl modification enzyme MnmG (629 aa).

13–18 (GGGHAG) serves as a coordination point for FAD. An NAD(+)-binding site is contributed by 273 to 287 (GPRYCPSIEDKIHRF).

Belongs to the MnmG family. In terms of assembly, homodimer. Heterotetramer of two MnmE and two MnmG subunits. FAD is required as a cofactor.

It localises to the cytoplasm. In terms of biological role, NAD-binding protein involved in the addition of a carboxymethylaminomethyl (cmnm) group at the wobble position (U34) of certain tRNAs, forming tRNA-cmnm(5)s(2)U34. The polypeptide is tRNA uridine 5-carboxymethylaminomethyl modification enzyme MnmG (Shewanella baltica (strain OS223)).